Here is a 188-residue protein sequence, read N- to C-terminus: Translation initiation factor IF-3 (188 aa).

This sequence belongs to the IF-3 family. Monomer.

Its subcellular location is the cytoplasm. IF-3 binds to the 30S ribosomal subunit and shifts the equilibrium between 70S ribosomes and their 50S and 30S subunits in favor of the free subunits, thus enhancing the availability of 30S subunits on which protein synthesis initiation begins. The protein is Translation initiation factor IF-3 of Fusobacterium nucleatum subsp. nucleatum (strain ATCC 25586 / DSM 15643 / BCRC 10681 / CIP 101130 / JCM 8532 / KCTC 2640 / LMG 13131 / VPI 4355).